The chain runs to 530 residues: C2H2-type transcription factor MSN2 (530 aa).

2 consecutive C2H2-type zinc fingers follow at residues 409–437 and 438–465; these read FVCD…QEKP and FECN…SGGA.

The protein resides in the nucleus. It is found in the cytoplasm. Functionally, transcription factor that acts as a key downstream transcription factor in the HOG1-MAPK pathway. Plays crucial roles in the regulation of dimorphism transition, aggravated pigmentation, conidiation, microsclerotia formation and subsequent virulence towards Spodoptera litura larvae. More specifically regulates the expression of genes involved in antioxidation, pigment biosynthesis and ion transport and storage. The polypeptide is C2H2-type transcription factor MSN2 (Metarhizium rileyi (strain RCEF 4871) (Nomuraea rileyi)).